Consider the following 103-residue polypeptide: Cell division protein FtsB (103 aa).

Residues 1-3 (MGK) are Cytoplasmic-facing. Residues 4 to 21 (LTLLLLAILVWLQYSLWF) form a helical membrane-spanning segment. Residues 22–103 (GKNGIHDYTR…RAQSAGQNNR (82 aa)) are Periplasmic-facing. Residues 28 to 71 (DYTRVNDDVAALQATNAKLKARNDQLFAEIDDLNGGQEALEERA) adopt a coiled-coil conformation.

It belongs to the FtsB family. Part of a complex composed of FtsB, FtsL and FtsQ.

Its subcellular location is the cell inner membrane. Functionally, essential cell division protein. May link together the upstream cell division proteins, which are predominantly cytoplasmic, with the downstream cell division proteins, which are predominantly periplasmic. The polypeptide is Cell division protein FtsB (Shigella flexneri serotype 5b (strain 8401)).